Reading from the N-terminus, the 191-residue chain is Peptidyl-tRNA hydrolase (191 aa).

TRNA is bound at residue Tyr17. Catalysis depends on His22, which acts as the Proton acceptor. 3 residues coordinate tRNA: Tyr68, Asn70, and Asn116.

It belongs to the PTH family. Monomer.

The protein resides in the cytoplasm. It carries out the reaction an N-acyl-L-alpha-aminoacyl-tRNA + H2O = an N-acyl-L-amino acid + a tRNA + H(+). Hydrolyzes ribosome-free peptidyl-tRNAs (with 1 or more amino acids incorporated), which drop off the ribosome during protein synthesis, or as a result of ribosome stalling. In terms of biological role, catalyzes the release of premature peptidyl moieties from peptidyl-tRNA molecules trapped in stalled 50S ribosomal subunits, and thus maintains levels of free tRNAs and 50S ribosomes. In Francisella tularensis subsp. mediasiatica (strain FSC147), this protein is Peptidyl-tRNA hydrolase.